The primary structure comprises 527 residues: Neutrophil cytosol factor 2 (527 aa).

3 TPR repeats span residues 37 to 70 (SRIC…DKHL), 71 to 104 (AVSY…LRGN), and 121 to 154 (CEVL…KSEP). Thr-233 bears the Phosphothreonine mark. The SH3 1 domain maps to 240–299 (LEGEAHRVLFGFVPETPEELQVMPGNIVFVLKKGNDNWATVMFNGQKGLVPCNYLEPVEL). Residues 304–345 (QQQPQEETSLESDIPAPPSSSAPGRPQLSPGQKGKEEPKQEI) form a disordered region. The residue at position 324 (Ser-324) is a Phosphoserine. Residues 336 to 345 (KGKEEPKQEI) show a composition bias toward basic and acidic residues. One can recognise a PB1 domain in the interval 352–430 (SYTLKVHYKY…YCLTLWCENT (79 aa)). Ser-400 carries the phosphoserine modification. Positions 434–457 (QGFPDEPEESKKSDANNQTTEPEL) are disordered. The SH3 2 domain occupies 458–517 (KEGSKVVALFSYEATQPEDLEFLEGDVILVISTVNEQWLEGECKGKVGIFPKAFVEQHPT).

The protein belongs to the NCF2/NOXA1 family. In terms of assembly, component of the phagocyte NADPH oxidase complex composed of an obligatory core heterodimer formed by the membrane proteins CYBA and CYBB and the cytosolic regulatory subunits NCF1/p47-phox, NCF2/p67-phox, NCF4/p40-phox and the small GTPase RAC1 or RAC2. Part of a cytosolic complex composed at least by NCF1, NCF2 and NCF4. Interacts with NCF4. Interacts (via the C-terminal SH3 domain) with NCF1 (via C-terminus). Interacts with SYTL1 and RAC1. May interact with NOXO1. Interacts with S100A8 and calprotectin (S100A8/9). Interacts with GBP7 (via GB1/RHD3-type G domain). Interacts with CYBB; the interaction is enhanced in the presence of GBP7.

It localises to the cytoplasm. In terms of biological role, subunit of the phagocyte NADPH oxidase complex that mediates the transfer of electrons from cytosolic NADPH to O2 to produce the superoxide anion (O2(-)). In the activated complex, electrons are first transferred from NADPH to flavin adenine dinucleotide (FAD) and subsequently transferred via two heme molecules to molecular oxygen, producing superoxide through an outer-sphere reaction. Activation of the NADPH oxidase complex is initiated by the assembly of cytosolic subunits of the NADPH oxidase complex with the core NADPH oxidase complex to form a complex at the plasma membrane or phagosomal membrane. This activation process is initiated by phosphorylation dependent binding of the cytosolic NCF1/p47-phox subunit to the C-terminus of CYBA/p22-phox. The sequence is that of Neutrophil cytosol factor 2 from Bos taurus (Bovine).